The sequence spans 378 residues: Tafazzin (378 aa).

At 1-137 (MFMVVCSNLR…RLRNPSKFWY (137 aa)) the chain is on the mitochondrial intermembrane side. The segment at 46-112 (APEARPVPDE…DQDADPSLDV (67 aa)) is disordered. Positions 51–67 (PVPDERYPGSQQDRKDI) are enriched in basic and acidic residues. An intramembrane segment occupies 138-158 (VVSQFVVSAVGIFSKVVLMFL). At 159 to 378 (NKPRVYNRER…ETEKLHRERN (220 aa)) the chain is on the mitochondrial intermembrane side. The HXXXXD motif signature appears at 188–193 (HYSCFD).

Belongs to the taffazin family. In terms of assembly, associates with multiple protein complexes. Association with large protein complexes occurs only in the presence of cardiolipin.

The protein localises to the mitochondrion outer membrane. The protein resides in the mitochondrion inner membrane. It localises to the mitochondrion. Its subcellular location is the mitochondrion membrane. It is found in the golgi apparatus membrane. The protein localises to the endoplasmic reticulum membrane. The catalysed reaction is 1'-[1,2-diacyl-sn-glycero-3-phospho],3'-[1-acyl-sn-glycero-3-phospho]-glycerol + a 1,2-diacyl-sn-glycero-3-phosphocholine = a cardiolipin + a 1-acyl-sn-glycero-3-phosphocholine. The enzyme catalyses 1'-[1,2-di-(9Z,12Z-octadecadienoyl)-sn-glycero-3-phospho]-3'-[1-(9Z,12Z-octadecadienoyl)-sn-glycero-3-phospho]-glycerol + 1-hexadecanoyl-2-(9Z,12Z-octadecadienoyl)-sn-glycero-3-phosphocholine = 1',3'-bis-[1,2-di-(9Z,12Z-octadecadienoyl)-sn-glycero-3-phospho]-glycerol + 1-hexadecanoyl-sn-glycero-3-phosphocholine. It carries out the reaction 1'-[1,2-di-(9Z,12Z-octadecadienoyl)-sn-glycero-3-phospho]-3'-[2-(9Z,12Z-octadecadienoyl)-sn-glycero-3-phospho]-glycerol + 1-hexadecanoyl-2-(9Z,12Z-octadecadienoyl)-sn-glycero-3-phosphocholine = 1',3'-bis-[1,2-di-(9Z,12Z-octadecadienoyl)-sn-glycero-3-phospho]-glycerol + 1-hexadecanoyl-sn-glycero-3-phosphocholine. It catalyses the reaction 1,2-di-(9Z,12Z-octadecadienoyl)-sn-glycero-3-phosphocholine + 1'-[1,2-di-(9Z,12Z-octadecadienoyl)-sn-glycero-3-phospho]-3'-[1-(9Z,12Z-octadecadienoyl)-sn-glycero-3-phospho]-glycerol = 1-(9Z,12Z)-octadecadienoyl-sn-glycero-3-phosphocholine + 1',3'-bis-[1,2-di-(9Z,12Z-octadecadienoyl)-sn-glycero-3-phospho]-glycerol. The catalysed reaction is 1-tetradecanoyl-sn-glycero-3-phosphocholine + 1',3'-bis-[1,2-di-(9Z,12Z-octadecadienoyl)-sn-glycero-3-phospho]-glycerol = 1-tetradecanoyl-2-(9Z,12Z-octadecadienoyl)-sn-glycero-3-phosphocholine + 1'-[1,2-di-(9Z,12Z-octadecadienoyl)-sn-glycero-3-phospho]-3'-[1-(9Z,12Z-octadecadienoyl)-sn-glycero-3-phospho]-glycerol. The enzyme catalyses 1',3'-bis[1,2-di-(9Z-octadecenoyl)-sn-glycero-3-phospho]-glycerol + 1-nonadecanoyl-sn-glycero-3-phosphocholine = 1-nonadecanoyl-2-(9Z-octadecenoyl)-sn-glycero-3-phosphocholine + 1'-[1,2-di-(9Z-octadecenoyl)-sn-glycero-3-phospho]-3'-[1-(9Z-octadecenoyl)-sn-glycero-3-phospho]-glycerol. It carries out the reaction a 1,2-diacyl-sn-glycero-3-phospho-(1'-sn-glycerol) + a 1-acyl-sn-glycero-3-phosphocholine = 1-acyl-sn-glycero-3-phospho-(1'-sn-glycerol) + a 1,2-diacyl-sn-glycero-3-phosphocholine. It catalyses the reaction 1-hexadecanoyl-2-(9Z,12Z-octadecadienoyl)-sn-glycero-3-phospho-(1'-sn-glycerol) + 1-hexadecanoyl-sn-glycero-3-phosphocholine = 1-hexadecanoyl-sn-glycero-3-phospho-(1'-sn-glycerol) + 1-hexadecanoyl-2-(9Z,12Z-octadecadienoyl)-sn-glycero-3-phosphocholine. The catalysed reaction is 1,2-di-(9Z-octadecenoyl)-sn-glycero-3-phospho-(1'-sn-glycerol) + 1-nonadecanoyl-sn-glycero-3-phosphocholine = 1-nonadecanoyl-2-(9Z-octadecenoyl)-sn-glycero-3-phosphocholine + 1-(9Z-octadecenoyl)-sn-glycero-3-phospho-(1'-sn-glycerol). The enzyme catalyses a 1,2-diacyl-sn-glycero-3-phosphate + a 1-acyl-sn-glycero-3-phosphocholine = a 1-acyl-sn-glycero-3-phosphate + a 1,2-diacyl-sn-glycero-3-phosphocholine. It carries out the reaction 1-hexadecanoyl-2-(9Z,12Z-octadecadienoyl)-sn-glycero-3-phosphate + 1-hexadecanoyl-sn-glycero-3-phosphocholine = 1-hexadecanoyl-2-(9Z,12Z-octadecadienoyl)-sn-glycero-3-phosphocholine + 1-hexadecanoyl-sn-glycero-3-phosphate. It catalyses the reaction 1-hexadecanoyl-2-(9Z,12Z-octadecadienoyl)-sn-glycero-3-phosphocholine + 1-(9Z-octadecenoyl)-sn-glycero-3-phosphate = 1-(9Z)-octadecenoyl-2-(9Z,12Z)-octadecadienoyl-sn-glycero-3-phosphate + 1-hexadecanoyl-sn-glycero-3-phosphocholine. The catalysed reaction is a 1-acyl-sn-glycero-3-phosphocholine + a 1,2-diacyl-sn-glycero-3-phosphoethanolamine = a 1-acyl-sn-glycero-3-phosphoethanolamine + a 1,2-diacyl-sn-glycero-3-phosphocholine. The enzyme catalyses 1-hexadecanoyl-2-(9Z,12Z-octadecadienoyl)-sn-glycero-3-phosphoethanolamine + 1-hexadecanoyl-sn-glycero-3-phosphocholine = 1-hexadecanoyl-2-(9Z,12Z-octadecadienoyl)-sn-glycero-3-phosphocholine + 1-hexadecanoyl-sn-glycero-3-phosphoethanolamine. It carries out the reaction 1,2-di-(9Z,12Z-octadecadienoyl)-sn-glycero-3-phosphoethanolamine + 1-tetradecanoyl-sn-glycero-3-phosphocholine = 1-(9Z,12Z-octadecadienoyl)-sn-glycero-3-phosphoethanolamine + 1-tetradecanoyl-2-(9Z,12Z-octadecadienoyl)-sn-glycero-3-phosphocholine. It catalyses the reaction 1'-[1,2-diacyl-sn-glycero-3-phospho],3'-[1-acyl-sn-glycero-3-phospho]-glycerol + a 1,2-diacyl-sn-glycero-3-phosphoethanolamine = a cardiolipin + a 1-acyl-sn-glycero-3-phosphoethanolamine. The catalysed reaction is 1-hexadecanoyl-2-(9Z,12Z-octadecadienoyl)-sn-glycero-3-phosphoethanolamine + 1'-[1,2-di-(9Z,12Z-octadecadienoyl)-sn-glycero-3-phospho]-3'-[1-(9Z,12Z-octadecadienoyl)-sn-glycero-3-phospho]-glycerol = 1',3'-bis-[1,2-di-(9Z,12Z-octadecadienoyl)-sn-glycero-3-phospho]-glycerol + 1-hexadecanoyl-sn-glycero-3-phosphoethanolamine. The enzyme catalyses 1'-[1-(9Z,12Z-octadecadienoyl)-2-(9Z-octadecenoyl)-sn-glycero-3-phospho]-3'-[1-(9Z,12Z-octadecadienoyl)-sn-glycero-3-phospho]-glycerol + 1',3'-bis-[1,2-di-(9Z,12Z-octadecadienoyl)-sn-glycero-3-phospho]-glycerol = 1'-[1,2-di-(9Z,12Z-octadecadienoyl)-sn-glycero-3-phospho]-3'-[1-(9Z,12Z-octadecadienoyl)-2-(9Z-octadecenoyl)-sn-glycero-3-phospho]-glycerol + 1'-[1,2-di-(9Z,12Z-octadecadienoyl)-sn-glycero-3-phospho]-3'-[1-(9Z,12Z-octadecadienoyl)-sn-glycero-3-phospho]-glycerol. It carries out the reaction 1,2-di-(9Z-hexadecenoyl)-sn-glycero-3-phosphocholine + 1-hexadecanoyl-sn-glycero-3-phosphocholine = 1-hexadecanoyl-2-(9Z-hexadecenoyl)-sn-glycero-3-phosphocholine + 1-(9Z-hexadecenoyl)-sn-glycero-3-phosphocholine. It catalyses the reaction 1,2-dioctadecanoyl-sn-glycero-3-phosphocholine + 1-hexadecanoyl-sn-glycero-3-phosphocholine = 1-hexadecanoyl-2-octadecanoyl-sn-glycero-3-phosphocholine + 1-octadecanoyl-sn-glycero-3-phosphocholine. The catalysed reaction is 1,2-di-(9Z-octadecenoyl)-sn-glycero-3-phosphocholine + 1-hexadecanoyl-sn-glycero-3-phosphocholine = 1-hexadecanoyl-2-(9Z-octadecenoyl)-sn-glycero-3-phosphocholine + 1-(9Z-octadecenoyl)-sn-glycero-3-phosphocholine. The enzyme catalyses 1,2-di-(9Z,12Z-octadecadienoyl)-sn-glycero-3-phosphocholine + 1-(9Z-octadecenoyl)-sn-glycero-3-phosphocholine = 1-(9Z)-octadecenoyl-2-(9Z,12Z)-octadecadienoyl-sn-glycero-3-phosphocholine + 1-(9Z,12Z)-octadecadienoyl-sn-glycero-3-phosphocholine. It carries out the reaction 1,2-di-(9Z,12Z,15Z-octadecatrienoyl)-sn-glycero-3-phosphocholine + 1-tetradecanoyl-sn-glycero-3-phosphocholine = 1-tetradecanoyl-2-(9Z,12Z,15Z-octadecatrienoyl)-sn-glycero-3-phosphocholine + 1-(9Z,12Z,15Z-octadecatrienoyl)-sn-glycero-3-phosphocholine. It catalyses the reaction 1-nonadecanoyl-sn-glycero-3-phosphocholine + 1-octadecanoyl-2-(9Z-octadecenoyl)-sn-glycero-3-phosphocholine = 1-nonadecanoyl-2-(9Z-octadecenoyl)-sn-glycero-3-phosphocholine + 1-octadecanoyl-sn-glycero-3-phosphocholine. The catalysed reaction is 1-(9Z)-octadecenoyl-2-octadecanoyl-sn-glycero-3-phosphocholine + 1-nonadecanoyl-sn-glycero-3-phosphocholine = 2-octadecanoyl-sn-glycero-3-phosphocholine + 1-nonadecanoyl-2-(9Z-octadecenoyl)-sn-glycero-3-phosphocholine. It participates in phospholipid metabolism. Its function is as follows. Acyltransferase required to remodel newly synthesized phospholipid cardiolipin (1',3'-bis-[1,2-diacyl-sn-glycero-3-phospho]-glycerol or CL), a key component of the mitochondrial inner membrane, with tissue specific acyl chains necessary for adequate mitochondrial function. Its role in cellular physiology is to improve mitochondrial performance. CL is critical for the coassembly of lipids and proteins in mitochondrial membranes. For instance, remodeling of the acyl groups of CL in the mitochondrial inner membrane affects the assembly and stability of respiratory chain complex IV and its supercomplex forms. Catalyzes the transacylation between phospholipids and lysophospholipids, with the highest rate being between phosphatidylcholine (1,2-diacyl-sn-glycero-3-phosphocholine or PC) and CL. Catalyzes both 1-acyl-sn-glycero-3-phosphocholine (lysophosphatidylcholine or LPC) reacylation and PC-CL transacylation, that means, it exchanges acyl groups between CL and PC by a combination of forward and reverse transacylations. Also catalyzes transacylations between other phospholipids such as phosphatidylethanolamine (1,2-diacyl-sn-glycero-3-phosphoethanolamine or PE) and CL, between PC and PE, and between PC and phosphatidate (1,2-diacyl-sn-glycero-3-phosphate or PA), although at lower rate. Not regiospecific, it transfers acyl groups into any of the sn-1 and sn-2 positions of the monolysocardiolipin (MLCL), which is an important prerequisite for uniformity and symmetry in CL acyl distribution. Cannot transacylate dilysocardiolipin (DLCL), thus, the role of MLCL is limited to that of an acyl acceptor. CoA-independent, it can reshuffle molecular species within a single phospholipid class. Redistributes fatty acids between MLCL, CL, and other lipids, which prolongs the half-life of CL. Its action is completely reversible, which allows for cyclic changes, such as fission and fusion or bending and flattening of the membrane. Hence, by contributing to the flexibility of the lipid composition, it plays an important role in the dynamics of mitochondria membranes. Essential for the final stage of spermatogenesis, spermatid individualization. Required for the initiation of mitophagy. This is Tafazzin from Drosophila melanogaster (Fruit fly).